The chain runs to 439 residues: Paraneoplastic antigen-like protein 8A (439 aa).

Residues 208 to 439 form a disordered region; the sequence is SALKAETPNN…RRATNESRKV (232 aa). Basic residues predominate over residues 231–249; that stretch reads LVRRAGAKSRSRRKKQKKN. 3 stretches are compositionally biased toward basic and acidic residues: residues 314 to 326, 395 to 404, and 423 to 439; these read GPRE…RAEA, SRREASDQKA, and AKPE…SRKV.

It belongs to the PNMA family.

The sequence is that of Paraneoplastic antigen-like protein 8A from Homo sapiens (Human).